A 261-amino-acid polypeptide reads, in one-letter code: Glutamate racemase (261 aa).

Substrate is bound by residues 12-13 (DS) and 44-45 (YG). The active-site Proton donor/acceptor is the Cys-76. 77 to 78 (NT) lines the substrate pocket. Cys-180 acts as the Proton donor/acceptor in catalysis. 181-182 (TH) provides a ligand contact to substrate.

Belongs to the aspartate/glutamate racemases family.

It carries out the reaction L-glutamate = D-glutamate. It participates in cell wall biogenesis; peptidoglycan biosynthesis. Its function is as follows. Provides the (R)-glutamate required for cell wall biosynthesis. This Borreliella burgdorferi (strain ATCC 35210 / DSM 4680 / CIP 102532 / B31) (Borrelia burgdorferi) protein is Glutamate racemase.